The primary structure comprises 175 residues: Inorganic pyrophosphatase (175 aa).

Residues K30, R44, and Y56 each coordinate substrate. Positions 66, 71, and 103 each coordinate Mg(2+). A substrate-binding site is contributed by Y142.

This sequence belongs to the PPase family. Homohexamer. It depends on Mg(2+) as a cofactor.

It localises to the cytoplasm. The enzyme catalyses diphosphate + H2O = 2 phosphate + H(+). Functionally, catalyzes the hydrolysis of inorganic pyrophosphate (PPi) forming two phosphate ions. The chain is Inorganic pyrophosphatase from Pseudomonas aeruginosa (strain ATCC 15692 / DSM 22644 / CIP 104116 / JCM 14847 / LMG 12228 / 1C / PRS 101 / PAO1).